We begin with the raw amino-acid sequence, 865 residues long: AdoMet-dependent rRNA methyltransferase SPB1 (865 aa).

Residues Gly-56, Trp-58, Asp-76, Asp-92, and Asp-117 each contribute to the S-adenosyl-L-methionine site. Lys-157 (proton acceptor) is an active-site residue. Coiled coils occupy residues 358-400 (ESMD…VRMQ) and 462-492 (GETD…RKAA). Disordered regions lie at residues 370-396 (LEKL…QKDI) and 443-676 (VVAS…TKDG). The span at 386–396 (RKENERKQKDI) shows a compositional bias: basic and acidic residues. Over residues 463 to 483 (ETDDESDEELDRLETELDDMY) the composition is skewed to acidic residues. Residues 484 to 497 (DQFRERKAASDAKY) show a composition bias toward basic and acidic residues. A compositionally biased stretch (acidic residues) spans 526-545 (ISDDSELEEESSGDSDDEDD). Over residues 556 to 566 (LDTTPSDNSGL) the composition is skewed to polar residues. The span at 600–609 (GEDEDADMED) shows a compositional bias: acidic residues. Basic and acidic residues-rich tracts occupy residues 610-627 (TVSK…ADKK) and 659-676 (KSGK…TKDG). Residues 762–789 (REAKGRKKMKAAQRLEKLKKKSDLLVNE) are a coiled coil.

The protein belongs to the class I-like SAM-binding methyltransferase superfamily. RNA methyltransferase RlmE family. SPB1 subfamily. As to quaternary structure, component of the nucleolar and nucleoplasmic pre-60S ribosomal particle.

It is found in the nucleus. The protein resides in the nucleolus. It carries out the reaction a ribonucleotide in rRNA + S-adenosyl-L-methionine = a 2'-O-methylribonucleotide in rRNA + S-adenosyl-L-homocysteine + H(+). Functionally, required for proper assembly of pre-ribosomal particles during the biogenesis of the 60S ribosomal subunit. In Pyricularia oryzae (strain 70-15 / ATCC MYA-4617 / FGSC 8958) (Rice blast fungus), this protein is AdoMet-dependent rRNA methyltransferase SPB1.